The chain runs to 331 residues: Eukaryotic translation initiation factor 3 subunit I (331 aa).

WD repeat units lie at residues 8–47 (LHER…RIGS), 49–88 (QCGG…QLDS), 142–181 (SPQC…LIKT), 184–223 (DHNK…LLRT), and 281–320 (GHIG…FEFD).

This sequence belongs to the eIF-3 subunit I family. In terms of assembly, component of the eukaryotic translation initiation factor 3 (eIF-3) complex.

It is found in the cytoplasm. Its function is as follows. Component of the eukaryotic translation initiation factor 3 (eIF-3) complex, which is involved in protein synthesis of a specialized repertoire of mRNAs and, together with other initiation factors, stimulates binding of mRNA and methionyl-tRNAi to the 40S ribosome. The eIF-3 complex specifically targets and initiates translation of a subset of mRNAs involved in cell proliferation. In Dictyostelium discoideum (Social amoeba), this protein is Eukaryotic translation initiation factor 3 subunit I (eif3I).